We begin with the raw amino-acid sequence, 308 residues long: UDP-3-O-acyl-N-acetylglucosamine deacetylase (308 aa).

Histidine 77, histidine 233, and aspartate 237 together coordinate Zn(2+). Histidine 260 (proton donor) is an active-site residue.

This sequence belongs to the LpxC family. It depends on Zn(2+) as a cofactor.

It catalyses the reaction a UDP-3-O-[(3R)-3-hydroxyacyl]-N-acetyl-alpha-D-glucosamine + H2O = a UDP-3-O-[(3R)-3-hydroxyacyl]-alpha-D-glucosamine + acetate. The protein operates within glycolipid biosynthesis; lipid IV(A) biosynthesis; lipid IV(A) from (3R)-3-hydroxytetradecanoyl-[acyl-carrier-protein] and UDP-N-acetyl-alpha-D-glucosamine: step 2/6. In terms of biological role, catalyzes the hydrolysis of UDP-3-O-myristoyl-N-acetylglucosamine to form UDP-3-O-myristoylglucosamine and acetate, the committed step in lipid A biosynthesis. This is UDP-3-O-acyl-N-acetylglucosamine deacetylase from Nitratidesulfovibrio vulgaris (strain ATCC 29579 / DSM 644 / CCUG 34227 / NCIMB 8303 / VKM B-1760 / Hildenborough) (Desulfovibrio vulgaris).